The chain runs to 273 residues: Large ribosomal subunit protein uL2cy (273 aa).

2 disordered regions span residues 1–22 (MAIH…DSQV) and 224–273 (NPVD…RRRK).

It belongs to the universal ribosomal protein uL2 family. Part of the 50S ribosomal subunit.

It localises to the plastid. The protein resides in the chloroplast. The sequence is that of Large ribosomal subunit protein uL2cy (rpl2-B) from Chloranthus spicatus (Chulantree).